We begin with the raw amino-acid sequence, 183 residues long: MKKVTDSFVSLGHWPSAGSFGFNTDILATNPINLSVVLGVLIFFGKGVLSDLLDNRKQRILSTIRNSEELRGGAIEKLEKAKARLRKVKAEADEFRTNGYSEIEREKCNLINSTYQNLERLENYKNETIQFEQQRAINQVRQRIFQQALQGALGTLNSCLNNELHLRTISANIGMFGAMKEIT.

The chain crosses the membrane as a helical span at residues 27–49 (LATNPINLSVVLGVLIFFGKGVL).

The protein belongs to the ATPase B chain family. As to quaternary structure, F-type ATPases have 2 components, F(1) - the catalytic core - and F(0) - the membrane proton channel. F(1) has five subunits: alpha(3), beta(3), gamma(1), delta(1), epsilon(1). F(0) has four main subunits: a(1), b(1), b'(1) and c(10-14). The alpha and beta chains form an alternating ring which encloses part of the gamma chain. F(1) is attached to F(0) by a central stalk formed by the gamma and epsilon chains, while a peripheral stalk is formed by the delta, b and b' chains.

The protein localises to the plastid. It is found in the chloroplast thylakoid membrane. Its function is as follows. F(1)F(0) ATP synthase produces ATP from ADP in the presence of a proton or sodium gradient. F-type ATPases consist of two structural domains, F(1) containing the extramembraneous catalytic core and F(0) containing the membrane proton channel, linked together by a central stalk and a peripheral stalk. During catalysis, ATP synthesis in the catalytic domain of F(1) is coupled via a rotary mechanism of the central stalk subunits to proton translocation. Functionally, component of the F(0) channel, it forms part of the peripheral stalk, linking F(1) to F(0). The chain is ATP synthase subunit b, chloroplastic from Ranunculus macranthus (Large buttercup).